The chain runs to 228 residues: Lipoprotein-releasing system ATP-binding protein LolD (228 aa).

Residues 7-227 (LQLSGIERHY…TIEDGKVVEL (221 aa)) enclose the ABC transporter domain. ATP is bound at residue 43 to 50 (APSGTGKS).

Belongs to the ABC transporter superfamily. Lipoprotein translocase (TC 3.A.1.125) family. In terms of assembly, the complex is composed of two ATP-binding proteins (LolD) and two transmembrane proteins (LolC and LolE).

Its subcellular location is the cell inner membrane. Part of the ABC transporter complex LolCDE involved in the translocation of mature outer membrane-directed lipoproteins, from the inner membrane to the periplasmic chaperone, LolA. Responsible for the formation of the LolA-lipoprotein complex in an ATP-dependent manner. This chain is Lipoprotein-releasing system ATP-binding protein LolD, found in Rhizobium meliloti (strain 1021) (Ensifer meliloti).